A 323-amino-acid chain; its full sequence is V-type ATP synthase subunit C (323 aa).

It belongs to the V-ATPase V0D/AC39 subunit family.

Functionally, produces ATP from ADP in the presence of a proton gradient across the membrane. In Thermus thermophilus (strain ATCC BAA-163 / DSM 7039 / HB27), this protein is V-type ATP synthase subunit C.